The primary structure comprises 392 residues: Putative RNA-binding protein Luc7-like 2 (392 aa).

Serine 18 is subject to Phosphoserine. Positions 102–177 form a coiled coil; it reads EVAKKRLAET…EAEEVYRNSM (76 aa). Positions 235 to 257 are enriched in basic and acidic residues; the sequence is KQEKRNQERLKRREEREREEREK. A disordered region spans residues 235–392; the sequence is KQEKRNQERL…SSEEREAGEI (158 aa). Over residues 258–321 the composition is skewed to basic residues; it reads LRRSRSHSKN…RSRSHQRSRH (64 aa). 5-hydroxylysine; by JMJD6 occurs at positions 266 and 269. Basic and acidic residues-rich tracts occupy residues 337–364 and 377–392; these read KERF…DRDR and RSED…AGEI.

Belongs to the Luc7 family. In terms of assembly, interacts with SCNM1.

It localises to the nucleus speckle. The protein localises to the nucleus. The protein resides in the nucleoplasm. Functionally, may bind to RNA via its Arg/Ser-rich domain. This chain is Putative RNA-binding protein Luc7-like 2 (LUC7L2), found in Homo sapiens (Human).